The primary structure comprises 312 residues: Dipeptide transport ATP-binding protein DppF (312 aa).

One can recognise an ABC transporter domain in the interval isoleucine 10–leucine 255. Glycine 45–threonine 52 lines the ATP pocket.

It belongs to the ABC transporter superfamily. As to quaternary structure, the complex is composed of two ATP-binding proteins (DppD and DppF), two transmembrane proteins (DppB and DppC) and a solute-binding protein (DppA).

The protein resides in the cell membrane. The enzyme catalyses a dipeptide(out) + ATP + H2O = a dipeptide(in) + ADP + phosphate + H(+). Part of the ABC transporter DppABCDF involved in dipeptide transport. Responsible for energy coupling to the transport system. This Lactococcus lactis subsp. cremoris (strain MG1363) protein is Dipeptide transport ATP-binding protein DppF.